A 140-amino-acid chain; its full sequence is Ribosome-binding factor A (140 aa).

Belongs to the RbfA family. In terms of assembly, monomer. Binds 30S ribosomal subunits, but not 50S ribosomal subunits or 70S ribosomes.

It localises to the cytoplasm. In terms of biological role, one of several proteins that assist in the late maturation steps of the functional core of the 30S ribosomal subunit. Associates with free 30S ribosomal subunits (but not with 30S subunits that are part of 70S ribosomes or polysomes). Required for efficient processing of 16S rRNA. May interact with the 5'-terminal helix region of 16S rRNA. This chain is Ribosome-binding factor A, found in Cereibacter sphaeroides (strain ATCC 17023 / DSM 158 / JCM 6121 / CCUG 31486 / LMG 2827 / NBRC 12203 / NCIMB 8253 / ATH 2.4.1.) (Rhodobacter sphaeroides).